The sequence spans 197 residues: Nucleoid occlusion factor SlmA (197 aa).

Positions 7 to 67 constitute an HTH tetR-type domain; the sequence is INRREHILQC…GLIDFIEESL (61 aa). The segment at residues 30-49 is a DNA-binding region (H-T-H motif); sequence TTAKLAAEVGVSEAALYRHF.

The protein belongs to the nucleoid occlusion factor SlmA family. As to quaternary structure, homodimer. Interacts with FtsZ.

The protein localises to the cytoplasm. It localises to the nucleoid. In terms of biological role, required for nucleoid occlusion (NO) phenomenon, which prevents Z-ring formation and cell division over the nucleoid. Acts as a DNA-associated cell division inhibitor that binds simultaneously chromosomal DNA and FtsZ, and disrupts the assembly of FtsZ polymers. SlmA-DNA-binding sequences (SBS) are dispersed on non-Ter regions of the chromosome, preventing FtsZ polymerization at these regions. The chain is Nucleoid occlusion factor SlmA from Shewanella loihica (strain ATCC BAA-1088 / PV-4).